The chain runs to 722 residues: Glycine--tRNA ligase beta subunit (722 aa).

Belongs to the class-II aminoacyl-tRNA synthetase family. Tetramer of two alpha and two beta subunits.

Its subcellular location is the cytoplasm. It carries out the reaction tRNA(Gly) + glycine + ATP = glycyl-tRNA(Gly) + AMP + diphosphate. The polypeptide is Glycine--tRNA ligase beta subunit (Haemophilus influenzae (strain 86-028NP)).